Consider the following 676-residue polypeptide: Rho guanine nucleotide exchange factor 37 (676 aa).

The segment at 1–26 is disordered; sequence MADFETDEASSKSESPEQEGQGSEDK. In terms of domain architecture, DH spans 30–213; the sequence is HQRLAIRELI…QDVNSNINEY (184 aa). Residues 254-455 enclose the BAR domain; that stretch reads LKQEAGLVPR…LPHRHVSEPD (202 aa). SH3 domains follow at residues 506–569 and 603–666; these read GPGK…LYHP and PTMS…RTPS. Disordered stretches follow at residues 568-601 and 657-676; these read HPIN…SVPT and PSNF…NLPS.

In terms of biological role, may act as a guanine nucleotide exchange factor (GEF). The sequence is that of Rho guanine nucleotide exchange factor 37 (Arhgef37) from Rattus norvegicus (Rat).